The chain runs to 1147 residues: Protein lin-41 (1147 aa).

Residues 1–93 are disordered; the sequence is MATIVPCSLE…PPSMIQSPQQ (93 aa). Over residues 33 to 47 the composition is skewed to low complexity; it reads SGNELSMGGSSSEGD. A compositionally biased stretch (basic and acidic residues) spans 48 to 65; that stretch reads SMSHHRGEHSPNHHHQDN. Residues 84 to 93 show a composition bias toward low complexity; it reads PPSMIQSPQQ. The segment at 114–155 adopts an RING-type zinc-finger fold; it reads CSVCSKSSTIGVLPFVCAHKTCQSCYQMTPSSYDRRACKLCG. The segment at 366–412 adopts a B box-type; atypical zinc-finger fold; it reads MGPIQCQGCESKISFAYCMQCQEALCIHCVQAHQRVRATKQHAFVEL. Zn(2+) contacts are provided by Cys-371, Cys-374, Cys-394, and His-398. The stretch at 565–618 forms a coiled coil; the sequence is AFDTHVNALEERRKELLKRVETVKNLKLSVLISQAESLQSKQIDLQQAIQTATK. One copy of the Filamin repeat lies at 723-817; sequence ACGDLLSSSI…ISGCPTTMDI (95 aa). NHL repeat units lie at residues 832-875, 879-922, 926-969, 974-1017, 1022-1065, and 1107-1147; these read ILTF…FDKD, ISKF…FDEN, LLKF…FTPQ, RKCG…LSPR, MKVY…FASD, and SAPT…IRVF. The segment at 1104–1123 is disordered; sequence AFSSAPTPLTPSPRQLLDRP.

It belongs to the TRIM/RBCC family.

Its subcellular location is the cytoplasm. The protein localises to the P-body. Its function is as follows. Heterochronic protein which acts downstream of let-7 in temporal patterning. Plays a role in the developmental timing of postembryonic hypodermal seam cell division and fusion events and adult alae production. Represses lin-29 during late larval stages, which prevents terminal differentiation of hypodermal seam cells and promotes their division. Involved in post-transcriptional gene regulation, uses two independent pathways. Has direct and specific RNA-binding activity and, depending on the location (5'UTR or 3'UTR) of the target site, triggers either mRNA decay or repression of translation. Degrades the mRNA of transcription factor dmd-3 to govern the timing and extent of male tail tip morphogenesis. Plays a role in the sexual maturation of the nervous system. This chain is Protein lin-41, found in Caenorhabditis elegans.